The primary structure comprises 293 residues: Ribosomal RNA small subunit methyltransferase A (293 aa).

Asn36, Leu38, Gly63, Glu84, Asp111, and Asn132 together coordinate S-adenosyl-L-methionine.

This sequence belongs to the class I-like SAM-binding methyltransferase superfamily. rRNA adenine N(6)-methyltransferase family. RsmA subfamily.

It is found in the cytoplasm. It catalyses the reaction adenosine(1518)/adenosine(1519) in 16S rRNA + 4 S-adenosyl-L-methionine = N(6)-dimethyladenosine(1518)/N(6)-dimethyladenosine(1519) in 16S rRNA + 4 S-adenosyl-L-homocysteine + 4 H(+). In terms of biological role, specifically dimethylates two adjacent adenosines (A1518 and A1519) in the loop of a conserved hairpin near the 3'-end of 16S rRNA in the 30S particle. May play a critical role in biogenesis of 30S subunits. The polypeptide is Ribosomal RNA small subunit methyltransferase A (Treponema denticola (strain ATCC 35405 / DSM 14222 / CIP 103919 / JCM 8153 / KCTC 15104)).